The sequence spans 569 residues: Protein Noxp20 (569 aa).

Disordered stretches follow at residues 1–87 (MSDD…GEVT), 102–126 (GDTG…QAGR), and 165–208 (ANSA…GSRG). T197 carries the post-translational modification Phosphothreonine. S262 carries the post-translational modification Phosphoserine. The interval 404–439 (VSIDVAKGSEEEEKEEGKEEKAEEPEEDKTGGQGAK) is disordered.

Belongs to the FAM114 family. In terms of tissue distribution, over-expressed in brain. Also detected in lung, stomach, and in a lower extent in testis and thymus.

The protein resides in the cytoplasm. Its function is as follows. May play a role in neuronal cell development. This Mus musculus (Mouse) protein is Protein Noxp20 (Fam114a1).